Consider the following 739-residue polypeptide: Interleukin-17 receptor D (739 aa).

The signal sequence occupies residues 1–16 (MAPWLQLCSVFFTVNA). Residues 17 to 299 (CLNGSQLAVA…VHSPWAGPIR (283 aa)) are Extracellular-facing. Residues asparagine 19, asparagine 55, asparagine 62, asparagine 80, asparagine 137, asparagine 171, asparagine 206, and asparagine 277 are each glycosylated (N-linked (GlcNAc...) asparagine). The chain crosses the membrane as a helical span at residues 300-320 (AVAITVPLVVISAFATLFTVM). At 321–739 (CRKKQQENIY…TDELHAVAPL (419 aa)) the chain is on the cytoplasmic side. Residues 355–509 (RPKVFLCYSS…LMDNLPQLCS (155 aa)) form the SEFIR domain. 2 disordered regions span residues 614–635 (GPADSQHESQHGGLDQDGEARP) and 650–719 (VKAG…SSGS). The span at 667–702 (SSVPSSELSLPLMEGLSTDQTETSSLTESVSSSSGL) shows a compositional bias: low complexity.

In terms of assembly, interacts with MAP3K7. Self-associates. Interacts with FGFR1, FGFR2 and phosphorylated MAP2K1 or MAP2K2. Associates with a MAP2K1/2-MAPK1/3 complex. As to expression, expressed in umbilical vein endothelial cells and in several highly vascularized tissues such as kidney, colon, skeletal muscle, heart and small intestine. Highly expressed in ductal epithelial cells of salivary glands, seminal vesicles and the collecting tubules of the kidney. Isoform 1 is also highly expressed in both fetal and adult brain, pituitary, tonsils, spleen, adenoids, fetal kidney, liver, testes and ovary. Isoform 1 is also expressed at moderate levels in primary aortic endothelial cells and adrenal medulla, and at low levels in adrenal cortex. Isoform 4 is specifically and highly expressed in pituitary, fetal brain and umbilical vein endothelial cells.

It localises to the golgi apparatus membrane. Its subcellular location is the cell membrane. The protein resides in the cytoplasm. Its function is as follows. Feedback inhibitor of fibroblast growth factor mediated Ras-MAPK signaling and ERK activation. Regulates the nuclear ERK signaling pathway by spatially blocking nuclear translocation of activated ERK without inhibiting cytoplasmic phosphorylation of ERK. Mediates JNK activation and may be involved in apoptosis. May inhibit FGF-induced FGFR1 tyrosine phosphorylation. Might have a role in the early stages of fate specification of GnRH-secreting neurons. Inhibits TGFB-induced epithelial-to-mesenchymal transition in lens epithelial cells. The protein is Interleukin-17 receptor D (IL17RD) of Homo sapiens (Human).